The following is a 267-amino-acid chain: Glucosamine-6-phosphate deaminase (267 aa).

The active-site Proton acceptor; for enolization step is Asp71. Asp140 functions as the For ring-opening step in the catalytic mechanism. His142 (proton acceptor; for ring-opening step) is an active-site residue. Catalysis depends on Glu147, which acts as the For ring-opening step.

Belongs to the glucosamine/galactosamine-6-phosphate isomerase family. As to quaternary structure, homohexamer.

Its subcellular location is the cytoplasm. The catalysed reaction is alpha-D-glucosamine 6-phosphate + H2O = beta-D-fructose 6-phosphate + NH4(+). The protein operates within nucleotide-sugar biosynthesis; UDP-N-acetyl-alpha-D-glucosamine biosynthesis; alpha-D-glucosamine 6-phosphate from D-fructose 6-phosphate: step 1/1. Functionally, catalyzes the reversible conversion of alpha-D-glucosamine 6-phosphate (GlcN-6P) into beta-D-fructose 6-phosphate (Fru-6P) and ammonium ion, a regulatory reaction step in de novo uridine diphosphate-N-acetyl-alpha-D-glucosamine (UDP-GlcNAc) biosynthesis via hexosamine pathway. In Caenorhabditis elegans, this protein is Glucosamine-6-phosphate deaminase.